Consider the following 60-residue polypeptide: MDDKDLKLILHKTFIEIYSDLEELADIAKKGKPSMEKYVEEIEQRCKQNILAIEIQMKIK.

Its function is as follows. Stabilizes the phosphorylated form of DegU, leading to enhanced production of levansucrase, alkaline protease, and neutral protease. The protein is Regulatory protein DegR (degR) of Bacillus subtilis subsp. natto.